A 372-amino-acid polypeptide reads, in one-letter code: Probable leucine aminopeptidase MCYG_03459 (372 aa).

Residues 1–18 (MKISTLAVVSAFAVTAIA) form the signal peptide. An N-linked (GlcNAc...) asparagine glycan is attached at asparagine 95. Residues histidine 175 and aspartate 194 each coordinate Zn(2+). Asparagine 195 and asparagine 219 each carry an N-linked (GlcNAc...) asparagine glycan. Glutamate 233 and aspartate 260 together coordinate Zn(2+). Cysteine 305 and cysteine 309 are disulfide-bonded. Position 338 (histidine 338) interacts with Zn(2+).

This sequence belongs to the peptidase M28 family. M28E subfamily. As to quaternary structure, monomer. The cofactor is Zn(2+).

The protein resides in the secreted. Its function is as follows. Probable extracellular aminopeptidase which contributes to pathogenicity. In Arthroderma otae (strain ATCC MYA-4605 / CBS 113480) (Microsporum canis), this protein is Probable leucine aminopeptidase MCYG_03459.